The primary structure comprises 179 residues: Translation initiation factor IF-3 (179 aa).

It belongs to the IF-3 family. Monomer.

The protein localises to the cytoplasm. Its function is as follows. IF-3 binds to the 30S ribosomal subunit and shifts the equilibrium between 70S ribosomes and their 50S and 30S subunits in favor of the free subunits, thus enhancing the availability of 30S subunits on which protein synthesis initiation begins. In Leptospira borgpetersenii serovar Hardjo-bovis (strain L550), this protein is Translation initiation factor IF-3.